The sequence spans 377 residues: RNA polymerase sigma factor SigA (377 aa).

Positions Glu72–Phe92 are disordered. The interval Leu144–Thr214 is sigma-70 factor domain-2. Positions Asp168–Gln171 match the Interaction with polymerase core subunit RpoC motif. The sigma-70 factor domain-3 stretch occupies residues Glu223–Ala299. Positions Val312–His365 are sigma-70 factor domain-4. A DNA-binding region (H-T-H motif) is located at residues Leu338–Ala357.

Belongs to the sigma-70 factor family. RpoD/SigA subfamily. Interacts transiently with the RNA polymerase catalytic core.

It localises to the cytoplasm. In terms of biological role, sigma factors are initiation factors that promote the attachment of RNA polymerase to specific initiation sites and are then released. This sigma factor is the primary sigma factor during exponential growth. This Bacillus sp protein is RNA polymerase sigma factor SigA.